Reading from the N-terminus, the 72-residue chain is Potassium channel toxin epsilon-KTx 1.1 (72 aa).

A signal peptide spans 1 to 30 (MKLSCGFLLILLVLSAMIATFSEVEAMKPS). Cystine bridges form between Cys-34/Cys-42, Cys-37/Cys-58, Cys-41/Cys-51, and Cys-46/Cys-56. Positions 60–72 (GRSDLNDELEKYQ) are excised as a propeptide.

It belongs to the short scorpion toxin superfamily. Potassium channel inhibitor family. Epsilon-KTx 01 subfamily. Expressed by the venom gland.

Its subcellular location is the secreted. In terms of biological role, potassium channel blocker. At 3 uM, this toxin blocks voltage-independently voltage-gated potassium channels rKv1.2/KCNA2 (25%), hKv1.3/KCNA3 (27%), rKv4.2/KCND2 (25%), Kv10.1/KCNH1/EAG1 (15%), Kv11/hERG (12%), and Shaker-IR (10%). On hKv1.3/KCNA3, the IC(50) is 17.1 +-3.3 uM. The protein is Potassium channel toxin epsilon-KTx 1.1 of Tityus serrulatus (Brazilian scorpion).